We begin with the raw amino-acid sequence, 270 residues long: uncharacterized protein (270 aa).

Disordered regions lie at residues 1–21 and 53–77; these read MSTNINEEKCLEGDDIKYEKP and PNILSSKHDGDKNKNDKKKEDAKLN. A compositionally biased stretch (basic and acidic residues) spans 58 to 75; sequence SKHDGDKNKNDKKKEDAK. The stretch at 182-270 forms a coiled coil; it reads EENKSREEKH…KIEDNLNTYE (89 aa).

This is an uncharacterized protein from Plasmodium falciparum (isolate 3D7).